A 224-amino-acid polypeptide reads, in one-letter code: 7-cyano-7-deazaguanine synthase (224 aa).

9–19 is an ATP binding site; it reads ISGGMDSTLCA. Zn(2+) contacts are provided by Cys-190, Cys-198, Cys-201, and Cys-204.

Belongs to the QueC family. Requires Zn(2+) as cofactor.

It carries out the reaction 7-carboxy-7-deazaguanine + NH4(+) + ATP = 7-cyano-7-deazaguanine + ADP + phosphate + H2O + H(+). It participates in purine metabolism; 7-cyano-7-deazaguanine biosynthesis. In terms of biological role, catalyzes the ATP-dependent conversion of 7-carboxy-7-deazaguanine (CDG) to 7-cyano-7-deazaguanine (preQ(0)). The chain is 7-cyano-7-deazaguanine synthase from Campylobacter jejuni subsp. jejuni serotype O:6 (strain 81116 / NCTC 11828).